The sequence spans 900 residues: Phosphoenolpyruvate carboxylase (900 aa).

Residues histidine 140 and lysine 568 contribute to the active site.

It belongs to the PEPCase type 1 family. Requires Mg(2+) as cofactor.

It carries out the reaction oxaloacetate + phosphate = phosphoenolpyruvate + hydrogencarbonate. Functionally, forms oxaloacetate, a four-carbon dicarboxylic acid source for the tricarboxylic acid cycle. This chain is Phosphoenolpyruvate carboxylase, found in Neisseria gonorrhoeae (strain ATCC 700825 / FA 1090).